A 944-amino-acid polypeptide reads, in one-letter code: Protein translocase subunit SecA (944 aa).

Residues Gln-96, 114–118 (GEGKT), and Asp-554 each bind ATP.

Belongs to the SecA family. Monomer and homodimer. Part of the essential Sec protein translocation apparatus which comprises SecA, SecYEG and auxiliary proteins SecDF. Other proteins may also be involved.

The protein resides in the cell inner membrane. It localises to the cytoplasm. The enzyme catalyses ATP + H2O + cellular proteinSide 1 = ADP + phosphate + cellular proteinSide 2.. Part of the Sec protein translocase complex. Interacts with the SecYEG preprotein conducting channel. Has a central role in coupling the hydrolysis of ATP to the transfer of proteins into and across the cell membrane, serving as an ATP-driven molecular motor driving the stepwise translocation of polypeptide chains across the membrane. This is Protein translocase subunit SecA from Hydrogenobaculum sp. (strain Y04AAS1).